We begin with the raw amino-acid sequence, 128 residues long: Mu-like prophage FluMu protein gp35 (128 aa).

A disordered region spans residues T53–N87.

To phage Mu protein gp35. In terms of assembly, monomer.

This chain is Mu-like prophage FluMu protein gp35, found in Haemophilus influenzae (strain ATCC 51907 / DSM 11121 / KW20 / Rd).